Here is a 479-residue protein sequence, read N- to C-terminus: MAIERQVTEAEEPVSPFARLFSLPGLDVFNIVTIGCKTEGNASTIVEGIKNTLINHPRFSSILVTGHGEHKGKARWIPTKINVEEHVIVPDIDPNIENPDEFLEDYTSNMALSPMDMSKPLWEFHLLKLKTSHAEAVTVARFHHSLGDGMSLMSLLLACTRKTCDPEAFPTFVAPKKNKAKNVCFSLVAWLWFIVRLMFHTCVEVIKSIVFICRASDTSAHIMGKPGATLSANKFIHRIISLDDVKMVKNAMNMTVNDVLFGMVQAGLSRYLNQRYDLETSSKSRKNLHNIGLHGVVFFNLRPNRNIEDLAKMMAKGSKCRWGNSIGYVLIPLGMKPQDDVFEYVRQAKTIMDGKKHSLEPLFSYGLLKVTMEVFGLRGLKTLVKRIFGSTTMIFSNVVGPDEEISFFGHRIAYIAASTFGVPQALNICIQSYVDKLIINIGVDVDVIPDPHHLCDLIIEALRMMNSAAPKKVFHASKV.

Residues 1–182 lie on the Cytoplasmic side of the membrane; the sequence is MAIERQVTEA…VAPKKNKAKN (182 aa). H144 acts as the Proton acceptor in catalysis. The helical transmembrane segment at 183 to 199 threads the bilayer; that stretch reads VCFSLVAWLWFIVRLMF. The Lumenal portion of the chain corresponds to 200 to 479; that stretch reads HTCVEVIKSI…PKKVFHASKV (280 aa). Residue N253 is glycosylated (N-linked (GlcNAc...) asparagine).

In the N-terminal section; belongs to the long-chain O-acyltransferase family. Mostly expressed in flowers and siliques and barely in roots and stems.

The protein resides in the cell membrane. The protein localises to the endoplasmic reticulum membrane. The enzyme catalyses an acyl-CoA + a 1,2-diacyl-sn-glycerol = a triacyl-sn-glycerol + CoA. The catalysed reaction is a long chain fatty alcohol + a fatty acyl-CoA = a wax ester + CoA. Its pathway is glycerolipid metabolism; triacylglycerol biosynthesis. It participates in lipid metabolism. In terms of biological role, bifunctional wax ester synthase/diacylglycerol acyltransferase. Involved in cuticular wax biosynthesis. In Arabidopsis thaliana (Mouse-ear cress), this protein is Wax ester synthase/diacylglycerol acyltransferase 2.